We begin with the raw amino-acid sequence, 334 residues long: Chitinase 9 (334 aa).

Residues 1–23 (MKATTTAVALLVAAAAMAAQVVA) form the signal peptide. Positions 24–64 (EQCGSQAGGALCPNCLCCSSYGWCGSTSDYCGDGCQSQCDG) constitute a Chitin-binding type-1 domain. Disulfide bonds link Cys-26/Cys-41, Cys-35/Cys-47, Cys-38/Cys-65, Cys-40/Cys-54, Cys-58/Cys-62, Cys-107/Cys-169, Cys-181/Cys-189, and Cys-288/Cys-320. The active-site Proton donor is the Glu-151.

Belongs to the glycosyl hydrolase 19 family. Chitinase class I subfamily. Expressed at high levels in roots, sheaths and meristems.

It carries out the reaction Random endo-hydrolysis of N-acetyl-beta-D-glucosaminide (1-&gt;4)-beta-linkages in chitin and chitodextrins.. Its function is as follows. May play a role in defense against fungal pathogens containing chitin. In Oryza sativa subsp. japonica (Rice), this protein is Chitinase 9 (Cht9).